The following is a 317-amino-acid chain: DNA-directed RNA polymerase subunit alpha (317 aa).

Residues 1 to 234 (MKQFVRPEFI…AHLEFFIDLN (234 aa)) are alpha N-terminal domain (alpha-NTD). The alpha C-terminal domain (alpha-CTD) stretch occupies residues 250 to 317 (DKELDRTVEE…ASLGLAFRQS (68 aa)).

The protein belongs to the RNA polymerase alpha chain family. As to quaternary structure, homodimer. The RNAP catalytic core consists of 2 alpha, 1 beta, 1 beta' and 1 omega subunit. When a sigma factor is associated with the core the holoenzyme is formed, which can initiate transcription.

The catalysed reaction is RNA(n) + a ribonucleoside 5'-triphosphate = RNA(n+1) + diphosphate. DNA-dependent RNA polymerase catalyzes the transcription of DNA into RNA using the four ribonucleoside triphosphates as substrates. This chain is DNA-directed RNA polymerase subunit alpha, found in Mycoplasma mycoides subsp. mycoides SC (strain CCUG 32753 / NCTC 10114 / PG1).